The chain runs to 636 residues: MSMKKTAAVEDKKISLDKESYIKSVQERIAKIPISNYRNFSIVAHVDHGKSTLSDRLLELTGVIQPGDANKQVLDKLDVERERGITVKAQTCSMFYVDPKSKEEYLLHLVDTPGHVDFRAEVSRSYASCGGALLLIDASQGVQAQTVANFYLAYSMGLKLIPVINKIDLDAADIPRAMDQVETTFELPREDCIPVSAKTGLNIENIIPAIIRDIPGPRGSVDKPLKALLVDSWHDPYVGVVMLIHVVDGVVKKGMKLLSAHSEKRYDVKEVGIMYPDKMPMDCVKAGQVAYIIPGMRNPREAMIGDTFYQYGKHEGLEPLPGFEEPKPMVFVGAFPADGGEFKVMNDHMENLVLNDRSVTLEKETSNALGLGWRLGFLGSLHASVFKERLENEYGAKIILTAPTVPYKLIFKDGEESIVTNPDEFPGADFRNHNIEMLMEPYVNALMTIPDEYIGTVMSLCENNRGIQKELEYLTTGQVLLKYEIPLAQLVEDFFGKLKGCTKGYASLDYEDAGYKKSDIVKMELCVNGEPQDALTQVMHRSQVLSRGKEYVTRFKEYLKFQLFEVAIQAKVNNKVVARETIKAKRKDVTQKLHAADISRRKKLLSRQKEGKKQMKATGKISINQEAYQAFLRRAD.

Residues 35-218 form the tr-type G domain; sequence SNYRNFSIVA…AIIRDIPGPR (184 aa). GTP-binding positions include 44–51, 111–115, and 165–168; these read AHVDHGKS, DTPGH, and NKID.

This sequence belongs to the TRAFAC class translation factor GTPase superfamily. Classic translation factor GTPase family. LepA subfamily.

The protein localises to the mitochondrion inner membrane. It catalyses the reaction GTP + H2O = GDP + phosphate + H(+). Promotes mitochondrial protein synthesis. May act as a fidelity factor of the translation reaction, by catalyzing a one-codon backward translocation of tRNAs on improperly translocated ribosomes. Binds to mitochondrial ribosomes in a GTP-dependent manner. The sequence is that of Translation factor GUF1, mitochondrial from Debaryomyces hansenii (strain ATCC 36239 / CBS 767 / BCRC 21394 / JCM 1990 / NBRC 0083 / IGC 2968) (Yeast).